Consider the following 245-residue polypeptide: tRNA (guanine-N(1)-)-methyltransferase (245 aa).

S-adenosyl-L-methionine-binding positions include glycine 108 and 127 to 132; that span reads IGDYVL.

It belongs to the RNA methyltransferase TrmD family. Homodimer.

It localises to the cytoplasm. It catalyses the reaction guanosine(37) in tRNA + S-adenosyl-L-methionine = N(1)-methylguanosine(37) in tRNA + S-adenosyl-L-homocysteine + H(+). Its function is as follows. Specifically methylates guanosine-37 in various tRNAs. The polypeptide is tRNA (guanine-N(1)-)-methyltransferase (Lactobacillus delbrueckii subsp. bulgaricus (strain ATCC 11842 / DSM 20081 / BCRC 10696 / JCM 1002 / NBRC 13953 / NCIMB 11778 / NCTC 12712 / WDCM 00102 / Lb 14)).